Reading from the N-terminus, the 223-residue chain is Cytidylate kinase (223 aa).

Position 10–18 (10–18) interacts with ATP; it reads GPASSGKST.

This sequence belongs to the cytidylate kinase family. Type 1 subfamily.

The protein localises to the cytoplasm. It carries out the reaction CMP + ATP = CDP + ADP. It catalyses the reaction dCMP + ATP = dCDP + ADP. The polypeptide is Cytidylate kinase (Streptococcus pneumoniae (strain Hungary19A-6)).